The primary structure comprises 699 residues: Glycine--tRNA ligase beta subunit (699 aa).

This sequence belongs to the class-II aminoacyl-tRNA synthetase family. Tetramer of two alpha and two beta subunits.

It is found in the cytoplasm. It carries out the reaction tRNA(Gly) + glycine + ATP = glycyl-tRNA(Gly) + AMP + diphosphate. This Methylobacterium radiotolerans (strain ATCC 27329 / DSM 1819 / JCM 2831 / NBRC 15690 / NCIMB 10815 / 0-1) protein is Glycine--tRNA ligase beta subunit.